The following is a 249-amino-acid chain: MTKKDIVSIVSKERAEEIYGLLTQSNLHSSDIEVIKKNEDYCLKILNEALTHTSFNLSINHERLEFQGDAVLRLAASEYIQSHFPKLSVGDRSALRAQLVSDRWLAKVGYKIGIKTTMLIANKALKDEAATDTICAEGTEALIGALYECLRNIDAIQNWLEPYWNIESEEVLADPHKQNEKSALQEWSQGQGLNKPIYTIKEISKQHGDLKRFYCTVHIQNDFRGEGWGSSRKKAQKEAAKEALKKLTN.

Residues 29 to 151 enclose the RNase III domain; sequence SSDIEVIKKN…LIGALYECLR (123 aa). Glu65 contacts Mg(2+). Asp69 is a catalytic residue. Residues Glu137 and Glu140 each coordinate Mg(2+). Residue Glu140 is part of the active site. The region spanning 179-249 is the DRBM domain; it reads NEKSALQEWS…AKEALKKLTN (71 aa). The tract at residues 227–249 is disordered; the sequence is GWGSSRKKAQKEAAKEALKKLTN. Basic and acidic residues predominate over residues 236–249; the sequence is QKEAAKEALKKLTN.

This sequence belongs to the ribonuclease III family. Homodimer. Requires Mg(2+) as cofactor.

Its subcellular location is the cytoplasm. The catalysed reaction is Endonucleolytic cleavage to 5'-phosphomonoester.. In terms of biological role, digests double-stranded RNA. Involved in the processing of primary rRNA transcript to yield the immediate precursors to the large and small rRNAs (23S and 16S). Processes some mRNAs, and tRNAs when they are encoded in the rRNA operon. Processes pre-crRNA and tracrRNA of type II CRISPR loci if present in the organism. In Prochlorococcus marinus (strain SARG / CCMP1375 / SS120), this protein is Ribonuclease 3.